The following is a 277-amino-acid chain: Undecaprenyl-diphosphatase (277 aa).

Transmembrane regions (helical) follow at residues 3 to 23 (IALL…EFLP), 44 to 64 (AKVF…LVYW), 82 to 102 (QFAL…LLFG), 109 to 129 (LFTP…ILWA), 188 to 208 (ATDF…VYSL), 218 to 238 (ADVP…WLCI), and 249 to 269 (SFIP…ATAW).

Belongs to the UppP family.

Its subcellular location is the cell inner membrane. It carries out the reaction di-trans,octa-cis-undecaprenyl diphosphate + H2O = di-trans,octa-cis-undecaprenyl phosphate + phosphate + H(+). In terms of biological role, catalyzes the dephosphorylation of undecaprenyl diphosphate (UPP). Confers resistance to bacitracin. The chain is Undecaprenyl-diphosphatase from Polaromonas sp. (strain JS666 / ATCC BAA-500).